The sequence spans 84 residues: MAHKKGGGSTKNGRDSNPKYLGVKAAGVSTVNAGTIILRQRGTAIKPGDNAGLGKDHTIFALVDGTVHFRNGRNNKKQVDIIPS.

The disordered stretch occupies residues 1–20; sequence MAHKKGGGSTKNGRDSNPKY.

The protein belongs to the bacterial ribosomal protein bL27 family.

The sequence is that of Large ribosomal subunit protein bL27 (rpmA) from Prosthecochloris vibrioformis (Chlorobium vibrioforme).